The chain runs to 433 residues: Probable glycine dehydrogenase (decarboxylating) subunit 1 (433 aa).

It belongs to the GcvP family. N-terminal subunit subfamily. The glycine cleavage system is composed of four proteins: P, T, L and H. In this organism, the P 'protein' is a heterodimer of two subunits.

It carries out the reaction N(6)-[(R)-lipoyl]-L-lysyl-[glycine-cleavage complex H protein] + glycine + H(+) = N(6)-[(R)-S(8)-aminomethyldihydrolipoyl]-L-lysyl-[glycine-cleavage complex H protein] + CO2. In terms of biological role, the glycine cleavage system catalyzes the degradation of glycine. The P protein binds the alpha-amino group of glycine through its pyridoxal phosphate cofactor; CO(2) is released and the remaining methylamine moiety is then transferred to the lipoamide cofactor of the H protein. The protein is Probable glycine dehydrogenase (decarboxylating) subunit 1 of Thermoplasma acidophilum (strain ATCC 25905 / DSM 1728 / JCM 9062 / NBRC 15155 / AMRC-C165).